We begin with the raw amino-acid sequence, 295 residues long: Probable protein phosphatase 2C 54 (295 aa).

The PPM-type phosphatase domain occupies Gly-78 to Leu-289. The Mn(2+) site is built by Asp-112, Gly-113, Asp-228, and Glu-280.

It belongs to the PP2C family. The cofactor is Mg(2+). Requires Mn(2+) as cofactor.

The catalysed reaction is O-phospho-L-seryl-[protein] + H2O = L-seryl-[protein] + phosphate. The enzyme catalyses O-phospho-L-threonyl-[protein] + H2O = L-threonyl-[protein] + phosphate. This is Probable protein phosphatase 2C 54 from Arabidopsis thaliana (Mouse-ear cress).